Consider the following 444-residue polypeptide: Proline--tRNA ligase (444 aa).

It belongs to the class-II aminoacyl-tRNA synthetase family. ProS type 2 subfamily. Homodimer.

The protein resides in the cytoplasm. The enzyme catalyses tRNA(Pro) + L-proline + ATP = L-prolyl-tRNA(Pro) + AMP + diphosphate. Its function is as follows. Catalyzes the attachment of proline to tRNA(Pro) in a two-step reaction: proline is first activated by ATP to form Pro-AMP and then transferred to the acceptor end of tRNA(Pro). In Maricaulis maris (strain MCS10) (Caulobacter maris), this protein is Proline--tRNA ligase.